A 376-amino-acid polypeptide reads, in one-letter code: UDP-N-acetylglucosamine 2-epimerase (376 aa).

Residues R10, K15, D95, E117, H213, Q271, F276, 290-292, E296, and R313 each bind substrate; that span reads SGG.

This sequence belongs to the UDP-N-acetylglucosamine 2-epimerase family. Homodimer.

It is found in the cytoplasm. It carries out the reaction UDP-N-acetyl-alpha-D-glucosamine = UDP-N-acetyl-alpha-D-mannosamine. It participates in bacterial outer membrane biogenesis; enterobacterial common antigen biosynthesis. With respect to regulation, allosterically activated by its substrate, UDP-GlcNAc. In terms of biological role, catalyzes the reversible epimerization at C-2 of UDP-N-acetylglucosamine (UDP-GlcNAc) and thereby provides bacteria with UDP-N-acetylmannosamine (UDP-ManNAc), the activated donor of ManNAc residues. Also involved in bacteriophage N4 adsorption. The sequence is that of UDP-N-acetylglucosamine 2-epimerase from Escherichia coli (strain K12).